The following is a 345-amino-acid chain: Protein RecA (345 aa).

Residue 65-72 (GPESSGKT) participates in ATP binding.

This sequence belongs to the RecA family.

Its subcellular location is the cytoplasm. Functionally, can catalyze the hydrolysis of ATP in the presence of single-stranded DNA, the ATP-dependent uptake of single-stranded DNA by duplex DNA, and the ATP-dependent hybridization of homologous single-stranded DNAs. It interacts with LexA causing its activation and leading to its autocatalytic cleavage. This is Protein RecA from Hahella chejuensis (strain KCTC 2396).